The following is a 232-amino-acid chain: Large ribosomal subunit protein uL1 (232 aa).

This sequence belongs to the universal ribosomal protein uL1 family. As to quaternary structure, part of the 50S ribosomal subunit.

Functionally, binds directly to 23S rRNA. The L1 stalk is quite mobile in the ribosome, and is involved in E site tRNA release. Protein L1 is also a translational repressor protein, it controls the translation of the L11 operon by binding to its mRNA. This Bartonella quintana (strain Toulouse) (Rochalimaea quintana) protein is Large ribosomal subunit protein uL1.